A 111-amino-acid chain; its full sequence is WAP four-disulfide core domain protein 12 (111 aa).

The N-terminal stretch at 1–23 is a signal peptide; sequence MGSSSFLVLTVSLALVTLVAAEG. Residues 27-74 form the WAP domain; that stretch reads GIEKAGVCPADNVRCFKSDPPQCHTDQDCLGARKCCYLHCGFKCVIPV. 4 disulfide bridges follow: Cys-34-Cys-62, Cys-41-Cys-66, Cys-49-Cys-61, and Cys-55-Cys-70. A disordered region spans residues 80–111; it reads GGNKDEDVSGPCPEPGWEAKSPGSSSTGCPQK. Residues 101 to 111 show a composition bias toward polar residues; sequence PGSSSTGCPQK.

It is found in the secreted. Its function is as follows. Antibacterial protein. Putative acid-stable proteinase inhibitor. The protein is WAP four-disulfide core domain protein 12 (WFDC12) of Papio anubis (Olive baboon).